The sequence spans 353 residues: tRNA-specific 2-thiouridylase MnmA 2 (353 aa).

6-13 (LLSGGVDS) lines the ATP pocket. Residues 92 to 94 (NPD) are interaction with target base in tRNA. Cysteine 97 functions as the Nucleophile in the catalytic mechanism. A disulfide bridge connects residues cysteine 97 and cysteine 192. Position 120 (glycine 120) interacts with ATP. The interaction with tRNA stretch occupies residues 142–144 (KDQ). Cysteine 192 acts as the Cysteine persulfide intermediate in catalysis.

This sequence belongs to the MnmA/TRMU family.

The protein resides in the cytoplasm. The enzyme catalyses S-sulfanyl-L-cysteinyl-[protein] + uridine(34) in tRNA + AH2 + ATP = 2-thiouridine(34) in tRNA + L-cysteinyl-[protein] + A + AMP + diphosphate + H(+). Its function is as follows. Catalyzes the 2-thiolation of uridine at the wobble position (U34) of tRNA, leading to the formation of s(2)U34. In Bacteroides fragilis (strain ATCC 25285 / DSM 2151 / CCUG 4856 / JCM 11019 / LMG 10263 / NCTC 9343 / Onslow / VPI 2553 / EN-2), this protein is tRNA-specific 2-thiouridylase MnmA 2.